A 320-amino-acid chain; its full sequence is Integrin-binding sialoprotein (320 aa).

Residues 1 to 16 (MKTALILLCILGMASA) form the signal peptide. S31, S68, S76, S77, and S96 each carry phosphoserine. 3 disordered regions span residues 60–117 (PVQG…VTAS), 136–225 (LPKK…RELT), and 238–264 (FQQT…VEYG). Positions 67-106 (SSEENGDGDSSEEEGEEEETSNEEENNEDSEGNEDQEAEA) are enriched in acidic residues. N-linked (GlcNAc...) asparagine glycosylation occurs at N108. Over residues 139–152 (KAGDAEGKAPKMKE) the composition is skewed to basic and acidic residues. Phosphoserine is present on S153. Residues 153–176 (SDEEEEEEEEEENENEEAEVDENE) are compositionally biased toward acidic residues. Composition is skewed to polar residues over residues 177–188 (QVVNGTSTNSTE) and 249–261 (GTTS…SSTV). N180 and N185 each carry an N-linked (GlcNAc...) asparagine glycan. Residues 289–291 (RGD) carry the Integrin-binding motif motif. A sulfotyrosine mark is found at Y316 and Y317.

As to quaternary structure, monomer. Interacts with integrins; the interaction promotes cell adhesion.

The protein resides in the secreted. In terms of biological role, binds tightly to hydroxyapatite. Appears to form an integral part of the mineralized matrix. Probably important to cell-matrix interaction. Promotes adhesion and migration of various cells via the alpha-V/beta-3 integrin receptor (ITGAV:ITGB3). The chain is Integrin-binding sialoprotein (Ibsp) from Rattus norvegicus (Rat).